The primary structure comprises 617 residues: ATP-dependent rRNA helicase SPB4 (617 aa).

Residues 7 to 35 carry the Q motif motif; the sequence is WADLDYELQPWIKKAINVSGFDSMTPVQA. In terms of domain architecture, Helicase ATP-binding spans 38-224; it reads IPMFAKNKDV…KTGLRNPVKI (187 aa). 51–58 contacts ATP; it reads SVTGSGKT. Positions 172–175 match the DEAD box motif; the sequence is DEAD. The Helicase C-terminal domain occupies 252 to 406; it reads NLIHIMNNIR…ETDINKNKIS (155 aa).

It belongs to the DEAD box helicase family. DDX55/SPB4 subfamily. Component of pre-60S ribosomal complexes.

The protein resides in the nucleus. It is found in the nucleolus. The enzyme catalyses ATP + H2O = ADP + phosphate + H(+). ATP-binding RNA helicase involved in the biogenesis of 60S ribosomal subunits. Binds 90S pre-ribosomal particles and dissociates from pre-60S ribosomal particles after processing of 27SB pre-rRNA. Required for the normal formation of 18S rRNA through the processing of pre-rRNAs at sites A0, A1 and A2, and the normal formation of 25S and 5.8S rRNAs through the processing of pre-rRNAs at sites C1 and C2. This is ATP-dependent rRNA helicase SPB4 from Candida glabrata (strain ATCC 2001 / BCRC 20586 / JCM 3761 / NBRC 0622 / NRRL Y-65 / CBS 138) (Yeast).